We begin with the raw amino-acid sequence, 55 residues long: ATP synthase F(0) complex subunit 8 (55 aa).

A helical transmembrane segment spans residues 9–29 (WFFIMIMSWAVFLLLIQPKLL).

This sequence belongs to the ATPase protein 8 family. As to quaternary structure, component of the ATP synthase complex composed at least of ATP5F1A/subunit alpha, ATP5F1B/subunit beta, ATP5MC1/subunit c (homooctomer), MT-ATP6/subunit a, MT-ATP8/subunit 8, ATP5ME/subunit e, ATP5MF/subunit f, ATP5MG/subunit g, ATP5MK/subunit k, ATP5MJ/subunit j, ATP5F1C/subunit gamma, ATP5F1D/subunit delta, ATP5F1E/subunit epsilon, ATP5PF/subunit F6, ATP5PB/subunit b, ATP5PD/subunit d, ATP5PO/subunit OSCP. ATP synthase complex consists of a soluble F(1) head domain (subunits alpha(3) and beta(3)) - the catalytic core - and a membrane F(0) domain - the membrane proton channel (subunits c, a, 8, e, f, g, k and j). These two domains are linked by a central stalk (subunits gamma, delta, and epsilon) rotating inside the F1 region and a stationary peripheral stalk (subunits F6, b, d, and OSCP).

The protein resides in the mitochondrion membrane. Its function is as follows. Subunit 8, of the mitochondrial membrane ATP synthase complex (F(1)F(0) ATP synthase or Complex V) that produces ATP from ADP in the presence of a proton gradient across the membrane which is generated by electron transport complexes of the respiratory chain. ATP synthase complex consist of a soluble F(1) head domain - the catalytic core - and a membrane F(1) domain - the membrane proton channel. These two domains are linked by a central stalk rotating inside the F(1) region and a stationary peripheral stalk. During catalysis, ATP synthesis in the catalytic domain of F(1) is coupled via a rotary mechanism of the central stalk subunits to proton translocation. In vivo, can only synthesize ATP although its ATP hydrolase activity can be activated artificially in vitro. Part of the complex F(0) domain. This is ATP synthase F(0) complex subunit 8 from Rhea americana (Greater rhea).